A 309-amino-acid polypeptide reads, in one-letter code: UDP-N-acetylenolpyruvoylglucosamine reductase (309 aa).

The FAD-binding PCMH-type domain maps to R33–A198. The active site involves R178. S227 functions as the Proton donor in the catalytic mechanism. E297 is a catalytic residue.

The protein belongs to the MurB family. It depends on FAD as a cofactor.

The protein resides in the cytoplasm. The enzyme catalyses UDP-N-acetyl-alpha-D-muramate + NADP(+) = UDP-N-acetyl-3-O-(1-carboxyvinyl)-alpha-D-glucosamine + NADPH + H(+). It functions in the pathway cell wall biogenesis; peptidoglycan biosynthesis. Functionally, cell wall formation. This Rhodopseudomonas palustris (strain HaA2) protein is UDP-N-acetylenolpyruvoylglucosamine reductase.